The primary structure comprises 347 residues: Methionine import ATP-binding protein MetN (347 aa).

The region spanning isoleucine 2–phenylalanine 247 is the ABC transporter domain. Glycine 38–serine 45 is a binding site for ATP.

It belongs to the ABC transporter superfamily. Methionine importer (TC 3.A.1.24) family. The complex is composed of two ATP-binding proteins (MetN), two transmembrane proteins (MetI) and a solute-binding protein (MetQ).

The protein resides in the cell membrane. It carries out the reaction L-methionine(out) + ATP + H2O = L-methionine(in) + ADP + phosphate + H(+). The catalysed reaction is D-methionine(out) + ATP + H2O = D-methionine(in) + ADP + phosphate + H(+). In terms of biological role, part of the ABC transporter complex MetNIQ involved in methionine import. Responsible for energy coupling to the transport system. The sequence is that of Methionine import ATP-binding protein MetN from Streptomyces avermitilis (strain ATCC 31267 / DSM 46492 / JCM 5070 / NBRC 14893 / NCIMB 12804 / NRRL 8165 / MA-4680).